Here is a 171-residue protein sequence, read N- to C-terminus: Ribulose bisphosphate carboxylase small subunit, chloroplastic (171 aa).

The transit peptide at 1 to 50 directs the protein to the chloroplast; that stretch reads MATGAGAGAATVVSAFTGLKSTAQFPSSFKMSNAAAEWEQKTTSNGGRVR.

The protein belongs to the RuBisCO small chain family. Heterohexadecamer of 8 large and 8 small subunits.

It localises to the plastid. It is found in the chloroplast. In terms of biological role, ruBisCO catalyzes two reactions: the carboxylation of D-ribulose 1,5-bisphosphate, the primary event in carbon dioxide fixation, as well as the oxidative fragmentation of the pentose substrate. Both reactions occur simultaneously and in competition at the same active site. Although the small subunit is not catalytic it is essential for maximal activity. This chain is Ribulose bisphosphate carboxylase small subunit, chloroplastic, found in Pinus thunbergii (Japanese black pine).